A 420-amino-acid polypeptide reads, in one-letter code: Glucose-1-phosphate adenylyltransferase (420 aa).

Alpha-D-glucose 1-phosphate-binding positions include Y107, G172, 187–188 (EK), and S205.

The protein belongs to the bacterial/plant glucose-1-phosphate adenylyltransferase family. Homotetramer.

The enzyme catalyses alpha-D-glucose 1-phosphate + ATP + H(+) = ADP-alpha-D-glucose + diphosphate. It functions in the pathway glycan biosynthesis; glycogen biosynthesis. Involved in the biosynthesis of ADP-glucose, a building block required for the elongation reactions to produce glycogen. Catalyzes the reaction between ATP and alpha-D-glucose 1-phosphate (G1P) to produce pyrophosphate and ADP-Glc. This Rhizobium etli (strain ATCC 51251 / DSM 11541 / JCM 21823 / NBRC 15573 / CFN 42) protein is Glucose-1-phosphate adenylyltransferase.